A 110-amino-acid polypeptide reads, in one-letter code: U1-lycotoxin-Ls1kk (110 aa).

An N-terminal signal peptide occupies residues 1–20 (MKFVLLFGVFLVTLFSYSSA). A propeptide spanning residues 21-44 (EMLDDFDQADEDELLSLIEKEEAR) is cleaved from the precursor. Intrachain disulfides connect cysteine 47–cysteine 62, cysteine 54–cysteine 71, cysteine 61–cysteine 89, and cysteine 73–cysteine 87.

The protein belongs to the neurotoxin 19 (CSTX) family. 03 subfamily. Expressed by the venom gland.

The protein resides in the secreted. This chain is U1-lycotoxin-Ls1kk, found in Lycosa singoriensis (Wolf spider).